The sequence spans 688 residues: Protein sel-1 homolog 2 (688 aa).

Positions 1-23 (MKPLSLLIEILIILGVTIKTIKA) are cleaved as a signal peptide. The Extracellular segment spans residues 24–662 (EEHNKRQKER…RWNWLKLDNT (639 aa)). Asparagine 34 is a glycosylation site (N-linked (GlcNAc...) asparagine). Sel1-like repeat units lie at residues 107–142 (GDQLFKMGIKVLQQSKSQKQKEEAYLLFAKAADMGN), 143–178 (LKAMEKMADALLFGNFGVQNITAAIQLYESLAKEGS), 179–214 (CKAQNALGFLSSYGIGMEYDQAKALIYYTFGSAGGN), 215–250 (MMSQMILGYRYLSGINVLQNCEVALSYYKKVADYIA), 297–333 (VQIQVSLGQLHLIGRKGLDQDYYKALHYFLKAAKAGS), 334–370 (ANAMAFIGKMYLEGNAAVPQNNATAFKYFSMAASKGN), 371–406 (AIGLHGLGLLYFHGKGVPLNYAEALKYFQKAAEKGW), 407–442 (PDAQFQLGFMYYSGSGIWKDYKLAFKYFYLASQSGQ), 443–478 (PLAIYYLAKMYATGTGVVRSCRTAVELYKGVCELGH), 551–586 (AFARVKIGDYHYYGYGTKKDYQTAATHYSIAANKYH), and 588–623 (AQAMFNLAYMYEHGLGITKDIHLARRLYDMAAQTSP). Residues 663–683 (IGPHWDLFVIGLIVPGLILLL) form a helical membrane-spanning segment. Topologically, residues 684-688 (RNHHG) are cytoplasmic.

The protein belongs to the sel-1 family.

The protein resides in the membrane. It is found in the cell projection. The protein localises to the cilium. Its subcellular location is the nucleus speckle. In Homo sapiens (Human), this protein is Protein sel-1 homolog 2 (SEL1L2).